The chain runs to 870 residues: Leucine--tRNA ligase (870 aa).

The short motif at 43–53 (PYPSGRIHMGH) is the 'HIGH' region element. The 'KMSKS' region signature appears at 630–634 (KMSKS). An ATP-binding site is contributed by lysine 633.

The protein belongs to the class-I aminoacyl-tRNA synthetase family.

It localises to the cytoplasm. The catalysed reaction is tRNA(Leu) + L-leucine + ATP = L-leucyl-tRNA(Leu) + AMP + diphosphate. This chain is Leucine--tRNA ligase, found in Parvibaculum lavamentivorans (strain DS-1 / DSM 13023 / NCIMB 13966).